Consider the following 163-residue polypeptide: Large ribosomal subunit protein uL15 (163 aa).

Residues 1 to 43 form a disordered region; that stretch reads MKLNEIADNEGSRKKRTRVGRGIGSGKGKQSGRGGKGQTARSG. Residues 21-37 are compositionally biased toward gly residues; it reads RGIGSGKGKQSGRGGKG.

It belongs to the universal ribosomal protein uL15 family. As to quaternary structure, part of the 50S ribosomal subunit.

Binds to the 23S rRNA. The sequence is that of Large ribosomal subunit protein uL15 from Afipia carboxidovorans (strain ATCC 49405 / DSM 1227 / KCTC 32145 / OM5) (Oligotropha carboxidovorans).